A 433-amino-acid chain; its full sequence is Probable carboxypeptidase ATEG_02905 (433 aa).

The first 18 residues, 1–18, serve as a signal peptide directing secretion; sequence MKSAISLLLASAATYVGA. The tract at residues 20-40 is disordered; the sequence is PHPEPPQLVLSPSTSTGVHGD. N-linked (GlcNAc...) asparagine glycosylation occurs at Asn92. Asp161 serves as a coordination point for Zn(2+). The Proton acceptor role is filled by Glu193. Residue Glu194 coordinates Zn(2+).

It belongs to the peptidase M20A family. Zn(2+) serves as cofactor.

The protein resides in the secreted. The chain is Probable carboxypeptidase ATEG_02905 from Aspergillus terreus (strain NIH 2624 / FGSC A1156).